The sequence spans 151 residues: Salivary C-type lectin 2 (151 aa).

The N-terminal stretch at 1-15 is a signal peptide; the sequence is MKLLLSFALLGLVAC. Residues 25–147 form the C-type lectin domain; the sequence is YCFPNEVATW…CTSKRRFVCE (123 aa). Cystine bridges form between cysteine 41–cysteine 146 and cysteine 118–cysteine 138.

Requires Ca(2+) as cofactor. As to expression, expressed in female salivary gland. Not detected or low-level expression in female midgut and fat body.

The protein resides in the secreted. Salivary protein with carbohydrate-binding activity. Binds to D-mannose, D-galactose, D-glucose and maltose. Agglutinates host erythrocytes. Probably participates in mosquito innate immune responses to prevent microorganism multiplication in sugar and blood meals. In terms of biological role, (Microbial infection) Binds to the surface of and agglutinates Escherichia coli in vitro. Its function is as follows. (Microbial infection) Binds to the surface of and agglutinates Pseudomonas aeruginosa in vitro. Functionally, (Microbial infection) Binds to the surface of and agglutinates Bacillus subtilis in vitro. (Microbial infection) Agglutinates Staphylococcus aureus in vitro. In terms of biological role, (Microbial infection) Agglutinates Candida albicans in vitro. Its function is as follows. (Microbial infection) Does not affect replication of dengue virus type 2 in host cells. This Aedes albopictus (Asian tiger mosquito) protein is Salivary C-type lectin 2.